The following is a 178-amino-acid chain: Fatty-acid and retinol-binding protein 1 (178 aa).

The N-terminal stretch at methionine 1–alanine 16 is a signal peptide. N-linked (GlcNAc...) asparagine glycosylation is found at asparagine 44 and asparagine 75. Coiled coils occupy residues aspartate 67 to asparagine 89 and lysine 123 to alanine 153. Residue asparagine 157 is glycosylated (N-linked (GlcNAc...) asparagine).

It belongs to the fatty-acid and retinol-binding protein (FARBP) family. N-glycosylated.

The protein resides in the secreted. In terms of biological role, binds retinol and different fatty acids. The polypeptide is Fatty-acid and retinol-binding protein 1 (Acanthocheilonema viteae (Filarial nematode worm)).